We begin with the raw amino-acid sequence, 202 residues long: ATP-dependent Clp protease proteolytic subunit (202 aa).

The active-site Nucleophile is Ser106. Residue His131 is part of the active site.

The protein belongs to the peptidase S14 family. In terms of assembly, fourteen ClpP subunits assemble into 2 heptameric rings which stack back to back to give a disk-like structure with a central cavity, resembling the structure of eukaryotic proteasomes.

The protein resides in the cytoplasm. The enzyme catalyses Hydrolysis of proteins to small peptides in the presence of ATP and magnesium. alpha-casein is the usual test substrate. In the absence of ATP, only oligopeptides shorter than five residues are hydrolyzed (such as succinyl-Leu-Tyr-|-NHMec, and Leu-Tyr-Leu-|-Tyr-Trp, in which cleavage of the -Tyr-|-Leu- and -Tyr-|-Trp bonds also occurs).. Cleaves peptides in various proteins in a process that requires ATP hydrolysis. Has a chymotrypsin-like activity. Plays a major role in the degradation of misfolded proteins. This chain is ATP-dependent Clp protease proteolytic subunit, found in Shewanella oneidensis (strain ATCC 700550 / JCM 31522 / CIP 106686 / LMG 19005 / NCIMB 14063 / MR-1).